The primary structure comprises 1392 residues: ENHANCER OF AG-4 protein 2 (1392 aa).

A PWWP domain is found at 20–77 (LGDLVLAKVKGFPAWPAKISRPEDWDRAPDPKKYFVQFFGTEEIAFVAPPDIQAFTSE). Residues 184–194 (ESKVKTTSPVS) show a composition bias toward polar residues. Disordered regions lie at residues 184-354 (ESKV…STGT), 384-428 (KRQR…PAAQ), 575-613 (KKPQ…GERL), and 723-766 (QGHH…GGSL). 3 stretches are compositionally biased toward basic and acidic residues: residues 196–215 (SLEH…DKGT), 239–258 (KEAG…DKSN), and 311–345 (LESE…KCEI). Residues 391 to 400 (EHATSPSFSG) are compositionally biased toward polar residues. Basic and acidic residues predominate over residues 401 to 417 (SRDKSGKGHLEQKDRSS). 2 stretches are compositionally biased toward polar residues: residues 591–601 (KISSSQSQPAN) and 725–744 (HHQQ…SRNQ). The 142-residue stretch at 771–912 (EAAISRDAFE…RYIDDIRASG (142 aa)) folds into the CID domain. 3 disordered regions span residues 957 to 986 (FFSS…AGER), 1014 to 1356 (LEME…NYQP), and 1369 to 1392 (PGHT…WRPA). A compositionally biased stretch (pro residues) spans 1059–1129 (EDSPPLPQES…SPPPPPPPPS (71 aa)). Residues 1157 to 1175 (LSHQTYPGSMQQDRSSIFT) show a composition bias toward polar residues. Residues 1215–1225 (SSREPSSFTSS) are compositionally biased toward low complexity. Composition is skewed to polar residues over residues 1240 to 1255 (EASS…TPLS) and 1265 to 1284 (APSS…QHSY). Residues 1293-1306 (QRDDARRYRNEEPW) are compositionally biased toward basic and acidic residues. The span at 1311–1320 (SGHSAENQNG) shows a compositional bias: polar residues.

Expressed in the inflorescence meristem, floral primordia, inflorescence stem, and floral pedicels. Also detected in the shoot apical meristem, stems, leaves, embryos, and roots.

The protein localises to the nucleus. Functionally, transcription factor that functions as a repressor of flowering by enhancing the expression of several genes that delay flowering including FLC, FLM/MAF1, MAF2 and SVP. Also acts in the floral homeotic AGAMOUS (AG) pathway, specifically by processing the AGAMOUS pre-mRNA. Functions in association with HUA1 and HEN4 in AG pre-mRNA processing. Involved in all three aspects of the AG functions, the specification of stamen and carpel identities, the control of floral determinacy, and the spatial restriction of AP1 expression. Acts as a transcription regulator that controls anthocyanin accumulation. The chain is ENHANCER OF AG-4 protein 2 from Arabidopsis thaliana (Mouse-ear cress).